The chain runs to 123 residues: Large ribosomal subunit protein bL12 (123 aa).

Belongs to the bacterial ribosomal protein bL12 family. As to quaternary structure, homodimer. Part of the ribosomal stalk of the 50S ribosomal subunit. Forms a multimeric L10(L12)X complex, where L10 forms an elongated spine to which 2 to 4 L12 dimers bind in a sequential fashion. Binds GTP-bound translation factors.

Its function is as follows. Forms part of the ribosomal stalk which helps the ribosome interact with GTP-bound translation factors. Is thus essential for accurate translation. This is Large ribosomal subunit protein bL12 from Clostridium botulinum (strain ATCC 19397 / Type A).